A 201-amino-acid chain; its full sequence is Thymidylate kinase (201 aa).

G7–T14 is a binding site for ATP.

This sequence belongs to the thymidylate kinase family.

The catalysed reaction is dTMP + ATP = dTDP + ADP. In terms of biological role, phosphorylation of dTMP to form dTDP in both de novo and salvage pathways of dTTP synthesis. This chain is Thymidylate kinase, found in Acholeplasma laidlawii (strain PG-8A).